A 171-amino-acid polypeptide reads, in one-letter code: ATP synthase subunit b (171 aa).

Residues Ile4 to Gln24 form a helical membrane-spanning segment.

The protein belongs to the ATPase B chain family. F-type ATPases have 2 components, F(1) - the catalytic core - and F(0) - the membrane proton channel. F(1) has five subunits: alpha(3), beta(3), gamma(1), delta(1), epsilon(1). F(0) has three main subunits: a(1), b(2) and c(10-14). The alpha and beta chains form an alternating ring which encloses part of the gamma chain. F(1) is attached to F(0) by a central stalk formed by the gamma and epsilon chains, while a peripheral stalk is formed by the delta and b chains.

It is found in the cell inner membrane. Its function is as follows. F(1)F(0) ATP synthase produces ATP from ADP in the presence of a proton or sodium gradient. F-type ATPases consist of two structural domains, F(1) containing the extramembraneous catalytic core and F(0) containing the membrane proton channel, linked together by a central stalk and a peripheral stalk. During catalysis, ATP synthesis in the catalytic domain of F(1) is coupled via a rotary mechanism of the central stalk subunits to proton translocation. Component of the F(0) channel, it forms part of the peripheral stalk, linking F(1) to F(0). This Helicobacter hepaticus (strain ATCC 51449 / 3B1) protein is ATP synthase subunit b.